Here is a 290-residue protein sequence, read N- to C-terminus: Nitrogenase iron protein 2 (290 aa).

Residue 10–17 (GKGGIGKS) coordinates ATP. Cys98 is a binding site for [4Fe-4S] cluster. Residue Arg101 is modified to ADP-ribosylarginine; by dinitrogenase reductase ADP-ribosyltransferase. Residue Cys133 participates in [4Fe-4S] cluster binding.

This sequence belongs to the NifH/BchL/ChlL family. In terms of assembly, homodimer. [4Fe-4S] cluster serves as cofactor. The reversible ADP-ribosylation of Arg-101 inactivates the nitrogenase reductase and regulates nitrogenase activity.

The catalysed reaction is N2 + 8 reduced [2Fe-2S]-[ferredoxin] + 16 ATP + 16 H2O = H2 + 8 oxidized [2Fe-2S]-[ferredoxin] + 2 NH4(+) + 16 ADP + 16 phosphate + 6 H(+). The key enzymatic reactions in nitrogen fixation are catalyzed by the nitrogenase complex, which has 2 components: the iron protein (component 2) and a component 1 which is either a molybdenum-iron protein, a vanadium-iron, or an iron-iron protein. The protein is Nitrogenase iron protein 2 (vnfH) of Azotobacter chroococcum mcd 1.